A 398-amino-acid chain; its full sequence is Type III polyketide synthase pspB (398 aa).

Residues lysine 47 and 47 to 54 contribute to the CoA site; that span reads KLLQINRS. The active-site Nucleophile is cysteine 152. A substrate-binding site is contributed by 214-215; the sequence is SD. CoA-binding positions include leucine 267, glycine 321, 321–324, and alanine 324; that span reads GGEA.

The protein belongs to the thiolase-like superfamily. Chalcone/stilbene synthases family. As to quaternary structure, homodimer.

It carries out the reaction 11 malonyl-CoA + acetyl-CoA + S-adenosyl-L-methionine + 12 NADPH + 22 H(+) = soppiline B + S-adenosyl-L-homocysteine + 12 CO2 + 12 NADP(+) + 12 CoA + 8 H2O. The protein operates within secondary metabolite biosynthesis. Type III polyketide synthase; part of the gene cluster that mediates the biosynthesis of the alkylresorcinols called soppilines. The biosynthesis starts with the HR-PKS pspA-catalyzed carbon chain assembly through nine chain elongation cycles, using acetyl CoA and malonyl CoA as a starter and extender units, respectively, to produce the polyketide soppiline A. In the first round, the KR, DH, and CMeT domains work to produce 2-methyl-2-butenyl thioester. In rounds 2 to 5, the KR, DH, and ER domains fully catalyze the reduction of the elongated beta-ketothioester, resulting in the insertion of eight methylene units. The unusual Z,E,Z-triene motif is likely constructed during rounds 6 to 8. Typically, the DH domain introduces a double bond at an alpha,beta-position of an elongated polyketide chain, with the dehydration of a beta-hydroxy group. The last extension cycle would be carried out with L-oriented beta-ketoreduction by the KR domain to produce beta-hydroxy carboxylic acid soppiline A. The type III PKS pspB intercepts the elongated polyketide chain at round 8 from the HR-PKS pspA, followed by a tri-keto extension and decarboxylative aldol cyclization to produce 1,3,5-trisubstituted alkylresorcinol soppiline B. Subsequently, the cytochrome P450 monooxygenase pspC catalyzes three-step oxidations at the C-4 methyl group to carboxylic acid to yield soppiline C. The chain is Type III polyketide synthase pspB from Penicillium soppii.